The following is a 521-amino-acid chain: Ribonuclease Y (521 aa).

Residues 3–23 (VSIWMLVITVLAAVAAYFAGS) form a helical membrane-spanning segment. The KH domain maps to 211 to 271 (TVSVVPLPSD…VRREVARMSL (61 aa)). The 94-residue stretch at 337 to 430 (IYQHSLEVAF…VQAADALSGA (94 aa)) folds into the HD domain.

It belongs to the RNase Y family.

The protein localises to the cell membrane. Endoribonuclease that initiates mRNA decay. The polypeptide is Ribonuclease Y (Pelobacter propionicus (strain DSM 2379 / NBRC 103807 / OttBd1)).